We begin with the raw amino-acid sequence, 68 residues long: Protein P33 (68 aa).

Positions 34 to 63 (IVNLQGRIAELEARETEMLARVDTLIARLA) form a coiled coil.

Assembly protein. This is Protein P33 (XXXIII) from Acinetobacter calcoaceticus (Arthrobacter siderocapsulatus).